The following is a 74-amino-acid chain: Putative membrane protein insertion efficiency factor (74 aa).

Belongs to the UPF0161 family.

It localises to the cell inner membrane. Its function is as follows. Could be involved in insertion of integral membrane proteins into the membrane. This is Putative membrane protein insertion efficiency factor from Syntrophus aciditrophicus (strain SB).